The sequence spans 502 residues: Glycerol kinase (502 aa).

T14 is an ADP binding site. Residues T14, T15, and S16 each coordinate ATP. Residue T14 participates in sn-glycerol 3-phosphate binding. An ADP-binding site is contributed by R18. Sn-glycerol 3-phosphate contacts are provided by R84, E85, and Y136. Residues R84, E85, and Y136 each contribute to the glycerol site. Residue H232 is modified to Phosphohistidine; by HPr. D246 contributes to the sn-glycerol 3-phosphate binding site. Glycerol contacts are provided by D246 and Q247. Residues T268 and G311 each coordinate ADP. ATP is bound by residues T268, G311, Q315, and G412. 2 residues coordinate ADP: G412 and N416.

The protein belongs to the FGGY kinase family. Homotetramer and homodimer (in equilibrium). The phosphoenolpyruvate-dependent sugar phosphotransferase system (PTS), including enzyme I, and histidine-containing protein (HPr) are required for the phosphorylation, which leads to the activation of the enzyme.

The enzyme catalyses glycerol + ATP = sn-glycerol 3-phosphate + ADP + H(+). The protein operates within polyol metabolism; glycerol degradation via glycerol kinase pathway; sn-glycerol 3-phosphate from glycerol: step 1/1. With respect to regulation, activated by phosphorylation and inhibited by fructose 1,6-bisphosphate (FBP). Its function is as follows. Key enzyme in the regulation of glycerol uptake and metabolism. Catalyzes the phosphorylation of glycerol to yield sn-glycerol 3-phosphate. This chain is Glycerol kinase, found in Streptococcus pneumoniae (strain 70585).